We begin with the raw amino-acid sequence, 245 residues long: 1-(5-phosphoribosyl)-5-[(5-phosphoribosylamino)methylideneamino] imidazole-4-carboxamide isomerase (245 aa).

Asp7 acts as the Proton acceptor in catalysis. Residue Asp129 is the Proton donor of the active site.

This sequence belongs to the HisA/HisF family.

Its subcellular location is the cytoplasm. It catalyses the reaction 1-(5-phospho-beta-D-ribosyl)-5-[(5-phospho-beta-D-ribosylamino)methylideneamino]imidazole-4-carboxamide = 5-[(5-phospho-1-deoxy-D-ribulos-1-ylimino)methylamino]-1-(5-phospho-beta-D-ribosyl)imidazole-4-carboxamide. It functions in the pathway amino-acid biosynthesis; L-histidine biosynthesis; L-histidine from 5-phospho-alpha-D-ribose 1-diphosphate: step 4/9. This is 1-(5-phosphoribosyl)-5-[(5-phosphoribosylamino)methylideneamino] imidazole-4-carboxamide isomerase from Shewanella amazonensis (strain ATCC BAA-1098 / SB2B).